The primary structure comprises 366 residues: Zinc transporter ZIP13 (366 aa).

The Lumenal segment spans residues 1 to 5 (MTKQK). The helical transmembrane segment at 6–26 (LLLNGTFSLILIVACEAQQLP) threads the bilayer. At 27–57 (RSHAASSSGPLCEKEAESWGNLLSSERLDAW) the chain is on the cytoplasmic side. The helical transmembrane segment at 58–78 (ICSLIGSFMVGLSGIFPLLVI) threads the bilayer. Residues 79 to 97 (PFETGAALRSEAGSRRLKQ) are Lumenal-facing. The chain crosses the membrane as a helical span at residues 98–118 (LLSFAIGGLLGNVFLHLLPEA). Over 119–137 (WAYTCSAAAGEGQSFQQQK) the chain is Cytoplasmic. The helical transmembrane segment at 138 to 158 (LLGLWVIIGFLTFLALEKIFL) threads the bilayer. The Lumenal portion of the chain corresponds to 159–225 (EKEEEECPGV…NRIKISGYLN (67 aa)). A disordered region spans residues 183–205 (SGYPPSKVAGKSQRAEKNSTQCN). The chain crosses the membrane as a helical span at residues 226-246 (LLANTIDNFTHGLAVAASFLV). The Cytoplasmic segment spans residues 247–282 (SRKVGFLTTMAILLHEIPHEVGDFAILLRAGFDRWS). An XEXPHE-motif motif is present at residues 261-266 (HEIPHE). A helical membrane pass occupies residues 283-303 (AAKMQLSTALGGIVGACFAIC). Topologically, residues 304–313 (AQSPKGAGET) are lumenal. A helical transmembrane segment spans residues 314-334 (VAWILPFTSGGFLYIALVNVV). Topologically, residues 335–343 (PDLLEEKNP) are cytoplasmic. Residues 344–364 (WNSLQQILLLCTGITVMVLLA) traverse the membrane as a helical segment. Residues 365–366 (HN) are Lumenal-facing.

It belongs to the ZIP transporter (TC 2.A.5) family. Homodimer.

It is found in the golgi apparatus membrane. The protein localises to the cytoplasmic vesicle membrane. It localises to the endoplasmic reticulum membrane. The enzyme catalyses Zn(2+)(in) = Zn(2+)(out). Its function is as follows. Functions as a zinc transporter transporting Zn(2+) from the Golgi apparatus to the cytosol and thus influences the zinc level at least in areas of the cytosol. In Gallus gallus (Chicken), this protein is Zinc transporter ZIP13.